The primary structure comprises 591 residues: Max-binding protein MNT (591 aa).

Ser-2 is modified (N-acetylserine). 2 disordered regions span residues 17–122 and 182–223; these read AQQQ…APRQ and PGVQ…GIGT. A compositionally biased stretch (basic and acidic residues) spans 22-44; that stretch reads RAREEQERLRLEREREREQEQKR. Pro residues-rich tracts occupy residues 63 to 84 and 102 to 120; these read EAPP…PLAT and SLPP…PLAP. Residues 205-216 show a composition bias toward basic and acidic residues; it reads PAEEAKSSEQKK. In terms of domain architecture, bHLH spans 222-273; the sequence is GTREVHNKLEKNRRAHLKECFETLKRNIPNVDDKKTSNLSVLRTALRYIQSL. The tract at residues 273 to 301 is leucine-zipper; it reads LKRKEKEYEHEMERLAREKIATQQRLAEL. The tract at residues 321–426 is disordered; the sequence is TGQPEDDQAS…PPPATPTQTL (106 aa). The span at 336 to 346 shows a compositional bias: acidic residues; the sequence is EGEDNVDEEME. Pro residues predominate over residues 374–383; it reads STAPAPLPTH. Residues 390-411 show a composition bias toward low complexity; the sequence is PVALSPAHLPVQQQQPPQQKTP. Positions 412–421 are enriched in pro residues; sequence LPAPPPPPAT.

As to quaternary structure, efficient DNA binding requires dimerization with another bHLH protein. Binds DNA as a homodimer or a heterodimer with MAX.

The protein resides in the nucleus. Functionally, binds DNA as a heterodimer with MAX and represses transcription. Binds to the canonical E box sequence 5'-CACGTG-3' and, with higher affinity, to 5'-CACGCG-3'. The protein is Max-binding protein MNT (Mnt) of Mus musculus (Mouse).